We begin with the raw amino-acid sequence, 605 residues long: Capsid scaffolding protein (605 aa).

Residues histidine 48, serine 116, and histidine 139 each act as charge relay system in the active site. A disordered region spans residues 235–275 (ASDAPDLQKPDKALQSPPPASTDPDTMLSGNAGEGATACGG). Positions 281–300 (QDLISVPRNTFMTLLQTNLD) are interaction with pAP. Disordered regions lie at residues 403–432 (DYVP…PGED) and 489–588 (PHQS…KSVS). The short motif at 410-416 (RSNKRKR) is the Nuclear localization signal element. Positions 568 to 579 (ASASGVAQSKEP) are enriched in polar residues. The interval 585-605 (KSVSAHLKSIFCEELLNKRVA) is interaction with major capsid protein.

This sequence belongs to the herpesviridae capsid scaffolding protein family. Homomultimer. Interacts with major capsid protein. As to quaternary structure, exists in a monomer-dimer equilibrium with the dimer being the active species. Capsid scaffolding protein is cleaved by assemblin after formation of the spherical procapsid. As a result, the capsid obtains its mature, icosahedral shape. Cleavages occur at two or more sites: release (R-site) and maturation (M-site).

The protein localises to the host cytoplasm. It localises to the host nucleus. The enzyme catalyses Cleaves -Ala-|-Ser- and -Ala-|-Ala- bonds in the scaffold protein.. In terms of biological role, acts as a scaffold protein by binding major capsid protein in the cytoplasm, inducing the nuclear localization of both proteins. Multimerizes in the nucleus such as major capsid protein forms the icosahedral T=16 capsid. Autocatalytic cleavage releases the assembly protein, and subsequently abolishes interaction with major capsid protein. Cleavages products are evicted from the capsid before or during DNA packaging. Functionally, protease that plays an essential role in virion assembly within the nucleus. Catalyzes the cleavage of the assembly protein after formation of the spherical procapsid. By that cleavage, the capsid matures and gains its icosahedral shape. The cleavage sites seem to include -Ala-Ser-, -Ala-Ala-, as well as Ala-Thr bonds. Assemblin and cleavages products are evicted from the capsid before or during DNA packaging. Plays a major role in capsid assembly. Acts as a scaffold protein by binding major capsid protein. Multimerizes in the nucleus such as major capsid protein forms the icosahedral T=16 capsid. Cleaved by assemblin after capsid completion. The cleavages products are evicted from the capsid before or during DNA packaging. The protein is Capsid scaffolding protein of Epstein-Barr virus (strain AG876) (HHV-4).